A 345-amino-acid polypeptide reads, in one-letter code: Membrane progestin receptor gamma-A (345 aa).

Topologically, residues 1–52 are cytoplasmic; that stretch reads MLNLIKLPQVFTINQVPKVFHEDGIISGYRHPCSSAKDCVLSLFQLTNETLN. The helical transmembrane segment at 53–73 threads the bilayer; sequence IWTHFLPTWFFLWKLLTVVLV. Residues 74 to 80 are Extracellular-facing; that stretch reads LEDWRDP. The chain crosses the membrane as a helical span at residues 81 to 101; sequence FIWPFLVFLLSCCVYPLASSC. Topologically, residues 102–114 are cytoplasmic; the sequence is AHTFSTMSERARH. A helical membrane pass occupies residues 115 to 135; that stretch reads ICFFFDYGALSFYSLGSAIIY. The Extracellular segment spans residues 136 to 148; it reads SSYSFPDKWVNGT. A helical transmembrane segment spans residues 149–169; sequence FHLNYVSIAVVNSIISTALAC. Over 170 to 201 the chain is Cytoplasmic; the sequence is YSRLGLPFLEYNCHSIKRPSGKLDQKLCKCLR. A helical membrane pass occupies residues 202-222; the sequence is IIAFVYPYLFDNIPLFYRIFV. The Extracellular segment spans residues 223–272; it reads CAGEGCTVNEANTVHYQHTSLAFFTGFLFATHLPERLAPGSFDYIGHSHQ. Residues 273 to 293 form a helical membrane-spanning segment; the sequence is LFHVFAIIGTYFQMTAIELDM. Over 294-314 the chain is Cytoplasmic; sequence AARKQWLHAHLPPVTFLNTVG. The helical transmembrane segment at 315–335 threads the bilayer; the sequence is AAFFSVVSGLCIVYVFSLSLF. At 336–345 the chain is on the extracellular side; the sequence is STRGVKNKSF.

It belongs to the ADIPOR family.

It is found in the membrane. Steroid membrane receptor. Binds progesterone. May be involved in oocyte maturation. The polypeptide is Membrane progestin receptor gamma-A (paqr5a) (Danio rerio (Zebrafish)).